The chain runs to 100 residues: NAD(P)H-quinone oxidoreductase subunit 4L, chloroplastic (100 aa).

Helical transmembrane passes span 1-21 (MIEN…YGLI), 29-49 (ALMC…TFSN), and 63-83 (ISVI…ILII).

The protein belongs to the complex I subunit 4L family. NDH is composed of at least 16 different subunits, 5 of which are encoded in the nucleus.

It localises to the plastid. The protein resides in the chloroplast thylakoid membrane. The enzyme catalyses a plastoquinone + NADH + (n+1) H(+)(in) = a plastoquinol + NAD(+) + n H(+)(out). It carries out the reaction a plastoquinone + NADPH + (n+1) H(+)(in) = a plastoquinol + NADP(+) + n H(+)(out). NDH shuttles electrons from NAD(P)H:plastoquinone, via FMN and iron-sulfur (Fe-S) centers, to quinones in the photosynthetic chain and possibly in a chloroplast respiratory chain. The immediate electron acceptor for the enzyme in this species is believed to be plastoquinone. Couples the redox reaction to proton translocation, and thus conserves the redox energy in a proton gradient. The protein is NAD(P)H-quinone oxidoreductase subunit 4L, chloroplastic of Angiopteris evecta (Mule's foot fern).